We begin with the raw amino-acid sequence, 442 residues long: Cyclic AMP receptor-like protein B (442 aa).

Topologically, residues Met1–His16 are extracellular. Residues Leu17–Ile37 form a helical membrane-spanning segment. Residues Thr38–Tyr219 lie on the Cytoplasmic side of the membrane. The interval Tyr83–Ile166 is disordered. Over residues Gln91 to Gln103 the composition is skewed to low complexity. Positions Ile112–Tyr122 are enriched in polar residues. Residues Ser123 to Ser144 are compositionally biased toward low complexity. Polar residues predominate over residues Tyr145–Ile166. The helical transmembrane segment at Leu220 to Phe240 threads the bilayer. Over Asn241–Arg255 the chain is Extracellular. A helical membrane pass occupies residues Val256 to Leu276. The Cytoplasmic segment spans residues Leu277–Arg289. A helical membrane pass occupies residues Phe290–Phe310. Residues Ser311–Leu334 are Extracellular-facing. The helical transmembrane segment at Tyr335–Ile355 threads the bilayer. Topologically, residues Tyr356 to Ser382 are cytoplasmic. Residues Phe383 to Leu403 form a helical membrane-spanning segment. Over Tyr404–Pro410 the chain is Extracellular. Residues Phe411–Ala431 form a helical membrane-spanning segment. The Cytoplasmic portion of the chain corresponds to Tyr432–Lys442.

This sequence belongs to the G-protein coupled receptor 5 family.

The protein localises to the membrane. In terms of biological role, receptor for cAMP. This is Cyclic AMP receptor-like protein B (crlB) from Dictyostelium discoideum (Social amoeba).